Reading from the N-terminus, the 1503-residue chain is Chromosome partition protein MukB (1503 aa).

Over residues Met-1–Lys-19 the composition is skewed to polar residues. The disordered stretch occupies residues Met-1–Leu-21. Position 65-72 (Gly-65–Ser-72) interacts with ATP. 5 coiled-coil regions span residues Met-370–Ser-495, Asp-536–Gln-616, Met-662–Asp-697, Glu-865–Glu-1173, and Asp-1238–Ile-1293. The tract at residues Ala-696–Arg-813 is flexible hinge.

This sequence belongs to the SMC family. MukB subfamily. As to quaternary structure, homodimerization via its hinge domain. Binds to DNA via its C-terminal region. Interacts, and probably forms a ternary complex, with MukE and MukF via its C-terminal region. The complex formation is stimulated by calcium or magnesium. Interacts with tubulin-related protein FtsZ.

It is found in the cytoplasm. The protein localises to the nucleoid. In terms of biological role, plays a central role in chromosome condensation, segregation and cell cycle progression. Functions as a homodimer, which is essential for chromosome partition. Involved in negative DNA supercoiling in vivo, and by this means organize and compact chromosomes. May achieve or facilitate chromosome segregation by condensation DNA from both sides of a centrally located replisome during cell division. The polypeptide is Chromosome partition protein MukB (Haemophilus ducreyi (strain 35000HP / ATCC 700724)).